Consider the following 173-residue polypeptide: Alpha-crystallin A chain (173 aa).

At Met1 the chain carries N-acetylmethionine. Residues Met1–Glu63 are required for complex formation with BFSP1 and BFSP2. A Deamidated glutamine; partial modification is found at Gln6. Residue Ser45 is modified to Phosphoserine. Gln50 is subject to Deamidated glutamine; partial. In terms of domain architecture, sHSP spans Leu52 to Ser162. Residues Lys70 and Lys99 each carry the N6-acetyllysine modification. Zn(2+) is bound at residue His100. The residue at position 101 (Asn101) is a Deamidated asparagine; partial. Zn(2+)-binding residues include Glu102 and His107. Ser122 carries the phosphoserine modification. Asn123 bears the Deamidated asparagine; partial mark. The segment at Lys145–Ser173 is disordered. Deamidated glutamine; partial is present on Gln147. Basic and acidic residues predominate over residues Gly153–Pro167. His154 provides a ligand contact to Zn(2+). The O-linked (GlcNAc) serine glycan is linked to Ser162.

The protein belongs to the small heat shock protein (HSP20) family. Heteromer composed of three CRYAA and one CRYAB subunits. Inter-subunit bridging via zinc ions enhances stability, which is crucial as there is no protein turn over in the lens. Can also form homodimers and homotetramers (dimers of dimers) which serve as the building blocks of homooligomers. Within homooligomers, the zinc-binding motif is created from residues of 3 different molecules. His-100 and Glu-102 from one molecule are ligands of the zinc ion, and His-107 and His-154 residues from additional molecules complete the site with tetrahedral coordination geometry. Part of a complex required for lens intermediate filament formation composed of BFSP1, BFSP2 and CRYAA. Post-translationally, acetylation at Lys-70 may increase chaperone activity. In terms of processing, undergoes age-dependent proteolytical cleavage at the C-terminus.

Its subcellular location is the cytoplasm. It localises to the nucleus. Functionally, contributes to the transparency and refractive index of the lens. Acts as a chaperone, preventing aggregation of various proteins under a wide range of stress conditions. Required for the correct formation of lens intermediate filaments as part of a complex composed of BFSP1, BFSP2 and CRYAA. This chain is Alpha-crystallin A chain (CRYAA), found in Meriones unguiculatus (Mongolian jird).